Reading from the N-terminus, the 640-residue chain is DNA topoisomerase 3 (640 aa).

The region spanning 21–175 (RVLCVAEKNS…WRAQFSHLEP (155 aa)) is the Toprim domain. Mg(2+) is bound by residues glutamate 27, aspartate 137, and aspartate 139. Residues 189–618 (DMKLVAAVEC…QLLPLYKEAF (430 aa)) enclose the Topo IA-type catalytic domain. Catalysis depends on tyrosine 354, which acts as the O-(5'-phospho-DNA)-tyrosine intermediate.

The protein belongs to the type IA topoisomerase family. Requires Mg(2+) as cofactor.

It carries out the reaction ATP-independent breakage of single-stranded DNA, followed by passage and rejoining.. Its function is as follows. Introduces a single-strand break via transesterification at a target site in duplex DNA. Releases the supercoiling and torsional tension of DNA introduced during the DNA replication and transcription by transiently cleaving and rejoining one strand of the DNA duplex. The scissile phosphodiester is attacked by the catalytic tyrosine of the enzyme, resulting in the formation of a DNA-(5'-phosphotyrosyl)-enzyme intermediate and the expulsion of a 3'-OH DNA strand. The polypeptide is DNA topoisomerase 3 (TOP3) (Candidozyma auris (Yeast)).